Consider the following 266-residue polypeptide: Ribosomal RNA small subunit methyltransferase A (266 aa).

Residues asparagine 10, isoleucine 12, glycine 37, glutamate 58, aspartate 82, and asparagine 105 each contribute to the S-adenosyl-L-methionine site.

The protein belongs to the class I-like SAM-binding methyltransferase superfamily. rRNA adenine N(6)-methyltransferase family. RsmA subfamily.

It localises to the cytoplasm. It carries out the reaction adenosine(1518)/adenosine(1519) in 16S rRNA + 4 S-adenosyl-L-methionine = N(6)-dimethyladenosine(1518)/N(6)-dimethyladenosine(1519) in 16S rRNA + 4 S-adenosyl-L-homocysteine + 4 H(+). Specifically dimethylates two adjacent adenosines (A1518 and A1519) in the loop of a conserved hairpin near the 3'-end of 16S rRNA in the 30S particle. May play a critical role in biogenesis of 30S subunits. This Mycoplasma mycoides subsp. mycoides SC (strain CCUG 32753 / NCTC 10114 / PG1) protein is Ribosomal RNA small subunit methyltransferase A.